We begin with the raw amino-acid sequence, 308 residues long: Ribosomal RNA small subunit methyltransferase H (308 aa).

S-adenosyl-L-methionine is bound by residues 33–35, Asp-52, Phe-78, Asp-99, and Gln-106; that span reads GGH. The segment at 289–308 is disordered; sequence EEIETNSRSRSAKLRVAEKL.

This sequence belongs to the methyltransferase superfamily. RsmH family.

It localises to the cytoplasm. The enzyme catalyses cytidine(1402) in 16S rRNA + S-adenosyl-L-methionine = N(4)-methylcytidine(1402) in 16S rRNA + S-adenosyl-L-homocysteine + H(+). Specifically methylates the N4 position of cytidine in position 1402 (C1402) of 16S rRNA. The chain is Ribosomal RNA small subunit methyltransferase H from Thermoanaerobacter sp. (strain X514).